The following is a 195-amino-acid chain: NADH-quinone oxidoreductase subunit B (195 aa).

The [4Fe-4S] cluster site is built by Cys-74, Cys-75, Cys-139, and Cys-169.

Belongs to the complex I 20 kDa subunit family. In terms of assembly, NDH-1 is composed of 14 different subunits. Subunits NuoB, C, D, E, F, and G constitute the peripheral sector of the complex. The cofactor is [4Fe-4S] cluster.

The protein localises to the cell inner membrane. It carries out the reaction a quinone + NADH + 5 H(+)(in) = a quinol + NAD(+) + 4 H(+)(out). In terms of biological role, NDH-1 shuttles electrons from NADH, via FMN and iron-sulfur (Fe-S) centers, to quinones in the respiratory chain. The immediate electron acceptor for the enzyme in this species is believed to be ubiquinone. Couples the redox reaction to proton translocation (for every two electrons transferred, four hydrogen ions are translocated across the cytoplasmic membrane), and thus conserves the redox energy in a proton gradient. The protein is NADH-quinone oxidoreductase subunit B of Methylorubrum extorquens (strain PA1) (Methylobacterium extorquens).